A 526-amino-acid chain; its full sequence is Dye-decolorizing peroxidase (526 aa).

An N-terminal signal peptide occupies residues 1-21 (MRKSISTFILLSVLSVGQLVA). Residues 22-63 (ARPRSTNAPPRRRTPQPRRTTSLFINPPALPDLPTVQAVDKL) constitute a propeptide that is removed on maturation. A glycan (N-linked (GlcNAc...) asparagine) is linked at Asn-186. Catalysis depends on Asp-231, which acts as the Proton acceptor. N-linked (GlcNAc...) asparagine glycosylation occurs at Asn-367. His-376 is a binding site for heme. 2 N-linked (GlcNAc...) asparagine glycosylation sites follow: Asn-473 and Asn-484.

This sequence belongs to the DyP-type peroxidase family. Heme b serves as cofactor.

It localises to the secreted. It catalyses the reaction Reactive Blue 5 + 2 H2O2 = 2,2'-disulfonyl azobenzene + 3-[(4-amino-6-chloro-1,3,5-triazin-2-yl)amino]benzenesulfonate + phthalate + 2 H2O + 2 H(+). The catalysed reaction is 2 a phenolic donor + H2O2 = 2 a phenolic radical donor + 2 H2O. Functionally, manganese-independent peroxidase that is able to convert a large number of compounds, but its physiological substrate is not known. In addition to classic peroxidase substrates (e.g. 2,6-dimethoxyphenol), oxidizes dyes such as Reactive Blue 5 and Reactive Black 5. The chain is Dye-decolorizing peroxidase from Mycena epipterygia (Yellow-stemmed mycena).